A 320-amino-acid chain; its full sequence is UDP-3-O-acyl-N-acetylglucosamine deacetylase (320 aa).

Residues H92, H251, and D255 each coordinate Zn(2+). The active-site Proton donor is H278.

It belongs to the LpxC family. Requires Zn(2+) as cofactor.

It carries out the reaction a UDP-3-O-[(3R)-3-hydroxyacyl]-N-acetyl-alpha-D-glucosamine + H2O = a UDP-3-O-[(3R)-3-hydroxyacyl]-alpha-D-glucosamine + acetate. The protein operates within glycolipid biosynthesis; lipid IV(A) biosynthesis; lipid IV(A) from (3R)-3-hydroxytetradecanoyl-[acyl-carrier-protein] and UDP-N-acetyl-alpha-D-glucosamine: step 2/6. Catalyzes the hydrolysis of UDP-3-O-myristoyl-N-acetylglucosamine to form UDP-3-O-myristoylglucosamine and acetate, the committed step in lipid A biosynthesis. The polypeptide is UDP-3-O-acyl-N-acetylglucosamine deacetylase (Psychrobacter arcticus (strain DSM 17307 / VKM B-2377 / 273-4)).